Consider the following 175-residue polypeptide: uncharacterized protein (175 aa).

The 173-residue stretch at 1–173 folds into the Macro domain; the sequence is MYKNIIKLIS…VYKEKYKKLL (173 aa).

The protein belongs to the MacroD-type family.

This is an uncharacterized protein from Fusobacterium nucleatum subsp. nucleatum (strain ATCC 25586 / DSM 15643 / BCRC 10681 / CIP 101130 / JCM 8532 / KCTC 2640 / LMG 13131 / VPI 4355).